A 201-amino-acid polypeptide reads, in one-letter code: Beta-lactamase inhibitory protein (201 aa).

The N-terminal stretch at 1 to 36 (MRTVGIGAGVRRLGRAVVMAAAVGGLVLGSAGASNA) is a signal peptide. Repeat copies occupy residues 37–112 (AGVM…EKLL) and 116–201 (APTL…WDLV). 2 cysteine pairs are disulfide-bonded: Cys-66–Cys-78 and Cys-145–Cys-167.

As to quaternary structure, interacts with E.coli beta-lactamase TEM-1; interaction inhibits hydrolysis of beta-lactam antibiotics. Interacts with K.pneumoniae beta-lactamase SHV-1. Interacts with K.pneumoniae beta-lactamases KPC-2 and KPC-3; interaction inhibits hydrolysis of beta-lactam antibiotics. Interacts with E.coli beta-lactamases CTX-M-14 and CTX-M-15; interaction inhibits hydrolysis of beta-lactam antibiotics.

It is found in the secreted. Inhibits a wide variety of beta lactamases. The polypeptide is Beta-lactamase inhibitory protein (Streptomyces clavuligerus).